The chain runs to 108 residues: Large ribosomal subunit protein uL24 (108 aa).

It belongs to the universal ribosomal protein uL24 family. Part of the 50S ribosomal subunit.

In terms of biological role, one of two assembly initiator proteins, it binds directly to the 5'-end of the 23S rRNA, where it nucleates assembly of the 50S subunit. Functionally, one of the proteins that surrounds the polypeptide exit tunnel on the outside of the subunit. The chain is Large ribosomal subunit protein uL24 from Mycoplasma genitalium (strain ATCC 33530 / DSM 19775 / NCTC 10195 / G37) (Mycoplasmoides genitalium).